A 900-amino-acid chain; its full sequence is Endoglucanase H (900 aa).

Residues 1–44 (MKKRLLVSFLVLSIIVGLLSFQSLGNYNSGLKIGAWVGTQPSES) form the signal peptide. A GH26 domain is found at 45-298 (AIKSFQELQG…NSSPEALAAY (254 aa)). The active-site Proton donor is Glu-131. Glu-244 serves as the catalytic Nucleophile. The catalytic stretch occupies residues 300–630 (EAIGAGSSNP…DTEILNALFN (331 aa)). The disordered stretch occupies residues 303 to 326 (GAGSSNPTPTPTWTSTPPSSSPKA). Over residues 306–324 (SSNPTPTPTWTSTPPSSSP) the composition is skewed to low complexity. The active-site Proton donor is Glu-460. The active-site Nucleophile is the Glu-565. The region spanning 655 to 900 (AVGEKMLDDF…LLKAISEIPI (246 aa)) is the CBM11 domain. Residues 827-900 (PSIKHGDLNF…LLKAISEIPI (74 aa)) enclose the Dockerin domain.

In the N-terminal section; belongs to the glycosyl hydrolase 5 (cellulase A) family. It in the C-terminal section; belongs to the glycosyl hydrolase 26 family.

It catalyses the reaction Endohydrolysis of (1-&gt;4)-beta-D-glucosidic linkages in cellulose, lichenin and cereal beta-D-glucans.. This enzyme catalyzes the endohydrolysis of 1,4-beta-glucosidic linkages in cellulose, lichenin and cereal beta-D-glucans. This chain is Endoglucanase H (celH), found in Acetivibrio thermocellus (strain ATCC 27405 / DSM 1237 / JCM 9322 / NBRC 103400 / NCIMB 10682 / NRRL B-4536 / VPI 7372) (Clostridium thermocellum).